Here is a 627-residue protein sequence, read N- to C-terminus: Lactose permease (627 aa).

Positions M1–Q460 are permease. The next 12 membrane-spanning stretches (helical) occupy residues A13–V33, I46–L66, W84–G104, P111–F131, V159–F179, W193–L213, L244–L264, L281–A301, L309–G329, V336–I356, W392–I412, and V419–F439. In terms of domain architecture, PTS EIIA type-1 spans D493–N597. Residue H545 is modified to Phosphohistidine; by HPr.

In the N-terminal section; belongs to the sodium:galactoside symporter (TC 2.A.2) family.

Its subcellular location is the cell membrane. Responsible for transport of beta-galactosides into the cell, with the concomitant uptake of protons (symport system), and also for transport of homologous and heterologous exchange of beta-galactosides. This is Lactose permease (lacY) from Lactobacillus delbrueckii subsp. bulgaricus (strain ATCC 11842 / DSM 20081 / BCRC 10696 / JCM 1002 / NBRC 13953 / NCIMB 11778 / NCTC 12712 / WDCM 00102 / Lb 14).